We begin with the raw amino-acid sequence, 394 residues long: Phosphoglycerate kinase (394 aa).

Residues 21-23 (DFN), Arg-36, 59-62 (HLGR), Arg-118, and Arg-151 each bind substrate. At Ser-183 the chain carries Phosphoserine. ATP is bound at residue Lys-201. Thr-299 carries the post-translational modification Phosphothreonine. Residues Glu-323 and 350-353 (GGDS) contribute to the ATP site.

The protein belongs to the phosphoglycerate kinase family. Monomer.

It localises to the cytoplasm. It catalyses the reaction (2R)-3-phosphoglycerate + ATP = (2R)-3-phospho-glyceroyl phosphate + ADP. It functions in the pathway carbohydrate degradation; glycolysis; pyruvate from D-glyceraldehyde 3-phosphate: step 2/5. The polypeptide is Phosphoglycerate kinase (Geobacillus sp. (strain WCH70)).